The primary structure comprises 157 residues: Phosphopantetheine adenylyltransferase (157 aa).

Residue threonine 10 coordinates substrate. Residues 10–11 (TF) and histidine 18 each bind ATP. Residues lysine 42, leucine 74, and arginine 88 each coordinate substrate. Residues 89 to 91 (GLR), glutamate 99, and 124 to 130 (NAFISSS) each bind ATP.

The protein belongs to the bacterial CoaD family. Homohexamer. The cofactor is Mg(2+).

It localises to the cytoplasm. It carries out the reaction (R)-4'-phosphopantetheine + ATP + H(+) = 3'-dephospho-CoA + diphosphate. The protein operates within cofactor biosynthesis; coenzyme A biosynthesis; CoA from (R)-pantothenate: step 4/5. Reversibly transfers an adenylyl group from ATP to 4'-phosphopantetheine, yielding dephospho-CoA (dPCoA) and pyrophosphate. This Helicobacter acinonychis (strain Sheeba) protein is Phosphopantetheine adenylyltransferase.